A 482-amino-acid chain; its full sequence is Glutamate-rich WD repeat-containing protein 1 (482 aa).

Disordered regions lie at residues 1–75 and 148–180; these read MSSK…WRAG and QLHKTKHDDEDSDDDEDSDDDEESDDEDDEDKD. 2 stretches are compositionally biased toward acidic residues: residues 27 to 63 and 157 to 180; these read NGEDDFENDDEVESFEDDEQSFEEIEEGGEEGGDNDG and EDSDDDEDSDDDEESDDEDDEDKD. WD repeat units lie at residues 191–231, 294–334, 337–377, 383–423, and 446–482; these read NHNG…KALD, GHTE…PAIT, AHTA…DNSP, YHTG…DTEE, and QGQHDIKEVHWHPQIPHVAISTSIDGFNIFKSSNSEE.

The protein localises to the nucleus. It localises to the nucleolus. The chain is Glutamate-rich WD repeat-containing protein 1 (grwd1) from Dictyostelium discoideum (Social amoeba).